Here is a 91-residue protein sequence, read N- to C-terminus: Small ribosomal subunit protein uS19 (91 aa).

It belongs to the universal ribosomal protein uS19 family.

Functionally, protein S19 forms a complex with S13 that binds strongly to the 16S ribosomal RNA. The chain is Small ribosomal subunit protein uS19 from Sphingopyxis alaskensis (strain DSM 13593 / LMG 18877 / RB2256) (Sphingomonas alaskensis).